Reading from the N-terminus, the 721-residue chain is Fatty acid oxidation complex subunit alpha (721 aa).

Positions 1-190 (MIYEGKAITV…KVGAVDAVVA (190 aa)) are enoyl-CoA hydratase/isomerase. Asp297 is a binding site for substrate. Residues 312 to 721 (KDVKQAAVLG…SFFGQASSEE (410 aa)) form a 3-hydroxyacyl-CoA dehydrogenase region. Residues Met325, Asp344, 401–403 (VVE), Lys408, and Ser430 contribute to the NAD(+) site. Residue His451 is the For 3-hydroxyacyl-CoA dehydrogenase activity of the active site. NAD(+) is bound at residue Asn454. Residues Asn501 and Tyr660 each contribute to the substrate site.

The protein in the N-terminal section; belongs to the enoyl-CoA hydratase/isomerase family. It in the C-terminal section; belongs to the 3-hydroxyacyl-CoA dehydrogenase family. In terms of assembly, heterotetramer of two alpha chains (FadB) and two beta chains (FadA).

The enzyme catalyses a (3S)-3-hydroxyacyl-CoA + NAD(+) = a 3-oxoacyl-CoA + NADH + H(+). It carries out the reaction a (3S)-3-hydroxyacyl-CoA = a (2E)-enoyl-CoA + H2O. It catalyses the reaction a 4-saturated-(3S)-3-hydroxyacyl-CoA = a (3E)-enoyl-CoA + H2O. The catalysed reaction is (3S)-3-hydroxybutanoyl-CoA = (3R)-3-hydroxybutanoyl-CoA. The enzyme catalyses a (3Z)-enoyl-CoA = a 4-saturated (2E)-enoyl-CoA. It carries out the reaction a (3E)-enoyl-CoA = a 4-saturated (2E)-enoyl-CoA. Its pathway is lipid metabolism; fatty acid beta-oxidation. In terms of biological role, involved in the aerobic and anaerobic degradation of long-chain fatty acids via beta-oxidation cycle. Catalyzes the formation of 3-oxoacyl-CoA from enoyl-CoA via L-3-hydroxyacyl-CoA. It can also use D-3-hydroxyacyl-CoA and cis-3-enoyl-CoA as substrate. The protein is Fatty acid oxidation complex subunit alpha of Pseudomonas syringae pv. syringae (strain B728a).